The sequence spans 207 residues: Large ribosomal subunit protein uL4 (207 aa).

The segment at 54-76 (RSAVRGGGRKPWRQKGTGRARQG) is disordered. Over residues 60–71 (GGRKPWRQKGTG) the composition is skewed to basic residues.

Belongs to the universal ribosomal protein uL4 family. In terms of assembly, part of the 50S ribosomal subunit.

Functionally, one of the primary rRNA binding proteins, this protein initially binds near the 5'-end of the 23S rRNA. It is important during the early stages of 50S assembly. It makes multiple contacts with different domains of the 23S rRNA in the assembled 50S subunit and ribosome. Its function is as follows. Forms part of the polypeptide exit tunnel. The polypeptide is Large ribosomal subunit protein uL4 (Staphylococcus haemolyticus (strain JCSC1435)).